A 113-amino-acid chain; its full sequence is Small ribosomal subunit protein uS17 (113 aa).

Belongs to the universal ribosomal protein uS17 family. As to quaternary structure, part of the 30S ribosomal subunit.

Its function is as follows. One of the primary rRNA binding proteins, it binds specifically to the 5'-end of 16S ribosomal RNA. The sequence is that of Small ribosomal subunit protein uS17 from Sulfurisphaera tokodaii (strain DSM 16993 / JCM 10545 / NBRC 100140 / 7) (Sulfolobus tokodaii).